Reading from the N-terminus, the 2014-residue chain is Leucine-rich repeat serine/threonine-protein kinase 1 (2014 aa).

ANK repeat units follow at residues 51–81, 86–116, 119–148, 152–182, and 193–222; these read QCPS…CEES, EKGQ…ELPT, TDDN…GPCT, LLNW…DPEN, and IVRL…YFCS. LRR repeat units follow at residues 279–300, 303–324, 330–351, 353–374, 381–402, 405–426, 427–447, 451–472, 474–495, 498–519, 549–570, 572–594, and 596–617; these read QITE…IPWG, NLKK…QSSD, RLLE…FLHL, KLQK…ENAT, KLQE…FMHS, SLTS…WSCP, LKCC…MAVF, HLRD…LFQL, ALMF…EKWT, QLKT…LKTK, SLEV…VCLL, NLSE…LGQL, and NLWQ…VRKE. A Roc domain is found at 632 to 826; the sequence is KAEKCKLMKM…QLIFHVTCNM (195 aa). Residues Pro-647, Arg-648, Gly-650, Lys-651, Ser-652, Thr-653, Glu-670, His-758, Asp-760, Cys-806, and Lys-807 each contribute to the GDP site. In terms of domain architecture, COR spans 840–1237; the sequence is GRLIPRSYIS…PARLFLENSK (398 aa). Thr-1061 is subject to Phosphothreonine. A phosphoserine mark is found at Ser-1064 and Ser-1074. Phosphothreonine is present on Thr-1075. Residues 1242–1525 form the Protein kinase domain; it reads EGENSILGQG…VVSQMKDPTF (284 aa). ATP contacts are provided by residues 1248–1256 and Lys-1270; that span reads LGQGGSGTV. Catalysis depends on Asp-1386, which acts as the Proton acceptor. 7 WD repeats span residues 1539–1579, 1582–1622, 1623–1668, 1693–1729, 1730–1778, 1779–1948, and 1950–1986; these read AFFS…RMTC, MKLS…QALD, TPAV…SCSY, VKAM…RLEP, YAAP…YFCG, DPNP…AVLK, and RELN…AVWR. The tract at residues 1791–1906 is WD40 loop; involved in dimer stabilization; sequence PSVLETPGSH…MDGETFSQHL (116 aa). Residues 1839 to 1895 form a disordered region; that stretch reads SMSSYSSSPPHQDPRSPSSLPSSLTSYSSVPFSANYEDSDRLQEPSVTSDRTEHDLS. Positions 1853–1871 are enriched in low complexity; the sequence is RSPSSLPSSLTSYSSVPFS.

This sequence belongs to the protein kinase superfamily. TKL Ser/Thr protein kinase family. ROCO subfamily. In terms of assembly, homodimer. The homodimer is autoinhibited and stabilized by its N-terminal residues and ANK repeats. Interacts with CSK. Requires Mg(2+) as cofactor. The cofactor is Mn(2+). Autophosphorylated. Autophosphorylation in inhibited in its dimeric state. Phosphorylated by protein kinase C isozymes PRKCA, PRKCB, PRKCG, PRKCE, PRKCZ and PRKCT at Ser-1064, Ser-1074 and Thr-1075. Phosphorylation at these residues activates the kinase activity of LRRK1 to phosphorylate RAB7A. Expressed in osteoclasts and bone marrow stromal cells.

The protein resides in the cytoplasm. The protein localises to the cell membrane. It carries out the reaction L-seryl-[protein] + ATP = O-phospho-L-seryl-[protein] + ADP + H(+). The catalysed reaction is L-threonyl-[protein] + ATP = O-phospho-L-threonyl-[protein] + ADP + H(+). Activated by phosphorylation by PKC. Binds both GTP and GDP; binding of GTP stimulates kinase activity. Sterically autoinhibited in its dimeric state. Functionally, serine/threonine-protein kinase which phosphorylates RAB proteins involved in intracellular trafficking. Phosphorylates RAB7A; this activity is dependent on protein kinase C (PKC) activation. Plays a role in the negative regulation of bone mass, acting through the maturation of osteoclasts. The protein is Leucine-rich repeat serine/threonine-protein kinase 1 of Mus musculus (Mouse).